The sequence spans 857 residues: Protein dalmatian (857 aa).

Disordered regions lie at residues 1-50 (MVRT…KLSI) and 146-194 (VQKS…FFHR). Composition is skewed to polar residues over residues 146-156 (VQKSTQPQNIK) and 165-176 (SPCQQRIRSKSP). Residues Ser-173, Ser-175, Ser-184, and Ser-222 each carry the phosphoserine modification. Basic residues predominate over residues 251–271 (GKPRAKRTAKKVRPVGNRRKV). Residues 251–281 (GKPRAKRTAKKVRPVGNRRKVSTKDNEPEPV) are disordered. Ser-405 is subject to Phosphoserine. Disordered stretches follow at residues 470-514 (SICP…NAEN) and 737-830 (PPRP…RDIE). Residues 771–781 (KQPRRTYVKER) show a composition bias toward basic and acidic residues. Positions 797 to 806 (SESEDEDEQD) are enriched in acidic residues. Positions 807-816 (SHDKSLDSPE) are enriched in basic and acidic residues. The span at 817–826 (KKRHHVKRPR) shows a compositional bias: basic residues.

The protein resides in the nucleus. Its subcellular location is the chromosome. Regulator of sister chromatid cohesion in mitosis. Probably involved in development of the central nervous system. This chain is Protein dalmatian (dmt), found in Drosophila melanogaster (Fruit fly).